A 131-amino-acid chain; its full sequence is Translation initiation factor 5A (131 aa).

Lys-37 carries the post-translational modification Hypusine.

It belongs to the eIF-5A family.

The protein resides in the cytoplasm. Its function is as follows. Functions by promoting the formation of the first peptide bond. The protein is Translation initiation factor 5A (eIF5A) of Methanococcus maripaludis (strain C5 / ATCC BAA-1333).